Here is an 80-residue protein sequence, read N- to C-terminus: Exodeoxyribonuclease 7 small subunit (80 aa).

This sequence belongs to the XseB family. In terms of assembly, heterooligomer composed of large and small subunits.

It is found in the cytoplasm. The catalysed reaction is Exonucleolytic cleavage in either 5'- to 3'- or 3'- to 5'-direction to yield nucleoside 5'-phosphates.. Functionally, bidirectionally degrades single-stranded DNA into large acid-insoluble oligonucleotides, which are then degraded further into small acid-soluble oligonucleotides. In Oleidesulfovibrio alaskensis (strain ATCC BAA-1058 / DSM 17464 / G20) (Desulfovibrio alaskensis), this protein is Exodeoxyribonuclease 7 small subunit.